Reading from the N-terminus, the 680-residue chain is Tumor protein 63 (680 aa).

Residues 1–107 (MNFETSRCAT…MQDSDLSDPM (107 aa)) form a transcription activation region. Over residues 123–157 (QIQNGSSSTSPYNTDHAQNSVTAPSPYAQPSSTFD) the composition is skewed to polar residues. Residues 123 to 171 (QIQNGSSSTSPYNTDHAQNSVTAPSPYAQPSSTFDALSPSPAIPSNTDY) form a disordered region. The DNA-binding element occupies 170-362 (DYPGPHSFDV…KADEDSIRKQ (193 aa)). Zn(2+)-binding residues include Cys-244, His-247, Cys-308, and Cys-312. A compositionally biased stretch (basic and acidic residues) spans 351 to 360 (DRKADEDSIR). Disordered regions lie at residues 351–393 (DRKA…IKKR) and 436–472 (RQQQ…MNSM). An interaction with HIPK2 region spans residues 352–388 (RKADEDSIRKQQVSDSAKNGDGTKRPFRQNTHGIQMT). Polar residues predominate over residues 379–389 (RQNTHGIQMTS). The segment at 394-443 (RSPDDELLYLPVRGRETYEMLLKIKESLELMQYLPQHTIETYRQQQQQQH) is oligomerization. A compositionally biased stretch (low complexity) spans 437–463 (QQQQQQHQHLLQKQTSMQSQSSYGNSS). The 67-residue stretch at 541 to 607 (PPYPTDCSIV…WKGILDHRQL (67 aa)) folds into the SAM domain. Residues 610-680 (FSSPPHLLRT…KQQRIKEEGE (71 aa)) form a transactivation inhibition region. Lys-676 is covalently cross-linked (Glycyl lysine isopeptide (Lys-Gly) (interchain with G-Cter in SUMO)).

The protein belongs to the p53 family. As to quaternary structure, binds DNA as a homotetramer. Isoform composition of the tetramer may determine transactivation activity. Interacts with HIPK2. Interacts with SSRP1, leading to stimulate coactivator activity. Interacts with PDS5A. Interacts (via activation domain) with NOC2L. Interacts with WWP1. Zn(2+) is required as a cofactor. In terms of processing, may be sumoylated. Post-translationally, ubiquitinated. Polyubiquitination involves WWP1 and leads to proteasomal degradation of this protein. Widely expressed, notably in thymus, prostate, placenta and skeletal muscle, although the precise isoform varies according to tissue type. Progenitor cell layers of skin, breast and prostate express high levels of DeltaN-type isoforms.

The protein resides in the nucleus. Acts as a sequence specific DNA binding transcriptional activator or repressor. The isoforms contain a varying set of transactivation and auto-regulating transactivation inhibiting domains thus showing an isoform specific activity. May be required in conjunction with TP73/p73 for initiation of p53/TP53 dependent apoptosis in response to genotoxic insults and the presence of activated oncogenes. Involved in Notch signaling by probably inducing JAG1 and JAG2. Activates transcription of the p21 promoter. Activates RIPK4 transcription. Plays a role in the regulation of epithelial morphogenesis. The ratio of DeltaN-type and TA*-type isoforms may govern the maintenance of epithelial stem cell compartments and regulate the initiation of epithelial stratification from the undifferentiated embryonal ectoderm. Required for limb formation from the apical ectodermal ridge. The chain is Tumor protein 63 (Tp63) from Mus musculus (Mouse).